Reading from the N-terminus, the 107-residue chain is Large ribosomal subunit protein uL18c (107 aa).

It belongs to the universal ribosomal protein uL18 family. As to quaternary structure, part of the 50S ribosomal subunit; contacts the 5S rRNA.

The protein localises to the plastid. Its subcellular location is the chloroplast. Binds 5S rRNA, forms part of the central protuberance of the 50S subunit. This is Large ribosomal subunit protein uL18c (rpl18) from Guillardia theta (Cryptophyte).